The primary structure comprises 92 residues: Bombyxin A-5 (92 aa).

Positions 1–19 are cleaved as a signal peptide; sequence MKLLLAIALMLTTVMWAST. At Gln20 the chain carries Pyrrolidone carboxylic acid. Cystine bridges form between Cys29/Cys79, Cys41/Cys92, and Cys78/Cys83. Positions 50 to 71 are cleaved as a propeptide — c peptide like; it reads SDAQFASYGSAWLMPYSEGRDQ.

It belongs to the insulin family. As to quaternary structure, heterodimer of a B chain and an A chain linked by two disulfide bonds.

It is found in the secreted. Brain peptide responsible for activation of prothoracic glands to produce ecdysone in insects. In Bombyx mori (Silk moth), this protein is Bombyxin A-5 (BBXA5).